Consider the following 139-residue polypeptide: uncharacterized protein (139 aa).

The 132-residue stretch at 8-139 folds into the HTH marR-type domain; that stretch reads ANLLDHALTK…FLAIIAKLAQ (132 aa). The segment at residues 53–76 is a DNA-binding region (H-T-H motif); it reads IKDILKEVTLSPSATTTALNHLEQ.

This is an uncharacterized protein from Bacillus subtilis (strain 168).